A 258-amino-acid chain; its full sequence is Tritrans,polycis-undecaprenyl-diphosphate synthase (geranylgeranyl-diphosphate specific) (258 aa).

Aspartate 37 is a catalytic residue. Aspartate 37 lines the Mg(2+) pocket. Residues 38–41 (GNRR), histidine 54, and 82–84 (STE) contribute to the substrate site. Catalysis depends on asparagine 85, which acts as the Proton acceptor. Substrate contacts are provided by residues phenylalanine 86, arginine 88, arginine 207, and 213 to 215 (RIS). Glutamate 226 serves as a coordination point for Mg(2+).

It belongs to the UPP synthase family. As to quaternary structure, homodimer. The cofactor is Mg(2+).

The enzyme catalyses geranylgeranyl diphosphate + 7 isopentenyl diphosphate = tri-trans,hepta-cis-undecaprenyl diphosphate + 7 diphosphate. Functionally, catalyzes the sequential condensation of isopentenyl diphosphate (IPP) with geranylgeranyl diphosphate (GGPP) to yield (2Z,6Z,10Z,14Z,18Z,22Z,26Z,30E,34E,38E)-undecaprenyl diphosphate (tritrans,heptacis-UPP). It is probably the precursor of glycosyl carrier lipids. The polypeptide is Tritrans,polycis-undecaprenyl-diphosphate synthase (geranylgeranyl-diphosphate specific) (Thermoplasma volcanium (strain ATCC 51530 / DSM 4299 / JCM 9571 / NBRC 15438 / GSS1)).